We begin with the raw amino-acid sequence, 488 residues long: 6-phosphogluconate dehydrogenase, decarboxylating (488 aa).

NADP(+) contacts are provided by residues G9–G14, N32–T34, V74–A76, and N102. Residues N102 and S128 to G130 contribute to the substrate site. K183 functions as the Proton acceptor in the catalytic mechanism. H186–N187 is a binding site for substrate. E190 (proton donor) is an active-site residue. Positions 191, 260, 287, 451, and 457 each coordinate substrate.

This sequence belongs to the 6-phosphogluconate dehydrogenase family. In terms of assembly, homodimer.

It catalyses the reaction 6-phospho-D-gluconate + NADP(+) = D-ribulose 5-phosphate + CO2 + NADPH. The protein operates within carbohydrate degradation; pentose phosphate pathway; D-ribulose 5-phosphate from D-glucose 6-phosphate (oxidative stage): step 3/3. Functionally, catalyzes the oxidative decarboxylation of 6-phosphogluconate to ribulose 5-phosphate and CO(2), with concomitant reduction of NADP to NADPH. The sequence is that of 6-phosphogluconate dehydrogenase, decarboxylating (gnd) from Treponema pallidum (strain Nichols).